We begin with the raw amino-acid sequence, 301 residues long: UDP-N-acetylenolpyruvoylglucosamine reductase 1 (301 aa).

Residues 29 to 196 (KIGGPADILI…LEAEFQLQIG (168 aa)) enclose the FAD-binding PCMH-type domain. The active site involves R174. S225 acts as the Proton donor in catalysis. Residue E295 is part of the active site.

It belongs to the MurB family. Requires FAD as cofactor.

Its subcellular location is the cytoplasm. The enzyme catalyses UDP-N-acetyl-alpha-D-muramate + NADP(+) = UDP-N-acetyl-3-O-(1-carboxyvinyl)-alpha-D-glucosamine + NADPH + H(+). It functions in the pathway cell wall biogenesis; peptidoglycan biosynthesis. Functionally, cell wall formation. This Bacillus cereus (strain ZK / E33L) protein is UDP-N-acetylenolpyruvoylglucosamine reductase 1.